The primary structure comprises 93 residues: Large ribosomal subunit protein uL23 (93 aa).

This sequence belongs to the universal ribosomal protein uL23 family. As to quaternary structure, part of the 50S ribosomal subunit. Contacts protein L29, and trigger factor when it is bound to the ribosome.

In terms of biological role, one of the early assembly proteins it binds 23S rRNA. One of the proteins that surrounds the polypeptide exit tunnel on the outside of the ribosome. Forms the main docking site for trigger factor binding to the ribosome. In Campylobacter hominis (strain ATCC BAA-381 / DSM 21671 / CCUG 45161 / LMG 19568 / NCTC 13146 / CH001A), this protein is Large ribosomal subunit protein uL23.